A 215-amino-acid polypeptide reads, in one-letter code: Cytochrome c biogenesis ATP-binding export protein CcmA (215 aa).

One can recognise an ABC transporter domain in the interval 3 to 211 (LTAEILAARR…KMTGFAGVDN (209 aa)). Residue 35–42 (GKNGSGKS) participates in ATP binding.

This sequence belongs to the ABC transporter superfamily. CcmA exporter (TC 3.A.1.107) family. As to quaternary structure, the complex is composed of two ATP-binding proteins (CcmA) and two transmembrane proteins (CcmB).

It localises to the cell inner membrane. The catalysed reaction is heme b(in) + ATP + H2O = heme b(out) + ADP + phosphate + H(+). Functionally, part of the ABC transporter complex CcmAB involved in the biogenesis of c-type cytochromes; once thought to export heme, this seems not to be the case, but its exact role is uncertain. Responsible for energy coupling to the transport system. This Rhizobium johnstonii (strain DSM 114642 / LMG 32736 / 3841) (Rhizobium leguminosarum bv. viciae) protein is Cytochrome c biogenesis ATP-binding export protein CcmA.